Consider the following 2170-residue polypeptide: ATP-binding cassette sub-family A member 7 (2170 aa).

A helical transmembrane segment spans residues 22–42 (PIQLVVELLWPLFLFFILVAV). Over 43-547 (RHSHPPLEHH…DVFLRVLSRS (505 aa)) the chain is Extracellular. An intrachain disulfide couples C75 to C222. N-linked (GlcNAc...) asparagine glycosylation is present at N309. The next 6 helical transmembrane spans lie at 548 to 568 (LPLF…KAVV), 591 to 611 (LGWF…LVLV), 624 to 644 (VVVF…SFLL), 653 to 673 (LAAA…VLCV), 679 to 699 (LPLG…GFGC), and 733 to 753 (AFLL…EAVC). Residues 805–1036 (VSIRGLKKHF…LGCGYYLTLV (232 aa)) form the ABC transporter 1 domain. 839–846 (GHNGAGKT) contributes to the ATP binding site. Residues 847–867 (TTLSILSGLFPPSSGSASILG) form a helical membrane-spanning segment. The tract at residues 1044-1086 (THDLKGDTEDPRREKKSGSEGKTADTVLTRDGPHRSSQVPAPD) is disordered. The span at 1045 to 1066 (HDLKGDTEDPRREKKSGSEGKT) shows a compositional bias: basic and acidic residues. Residues 1257 to 1277 (IVLPALFVGLALFFTLIVPPF) form a helical membrane-spanning segment. The Extracellular portion of the chain corresponds to 1278-1562 (GQYPPLQLSP…TLIASSVDVL (285 aa)). C1370 and C1384 are oxidised to a cystine. 6 helical membrane-spanning segments follow: residues 1563-1583 (VSIC…LVLI), 1609-1629 (FLWD…IFLA), 1646-1666 (LLLL…SFFF), 1674-1694 (VVLT…TFVL), 1708-1728 (ILKQ…LIDM), and 1754-1774 (IIGK…LITL). Positions 1818-2050 (LVLRDLTKVY…FGAGHTLTLR (233 aa)) constitute an ABC transporter 2 domain. 1852-1859 (GVNGAGKT) lines the ATP pocket. Residues 2129-2170 (QGEEEEGSGQETETREVSTPGLQHPKRVSRFLEDPSSVETVI) are disordered.

The protein belongs to the ABC transporter superfamily. ABCA family. Post-translationally, N-glycosylated. In terms of tissue distribution, expressed in blood cells. Also detected in brain and ovary tissues (at protein level). Expressed in platelet.

Its subcellular location is the cell membrane. It is found in the golgi apparatus membrane. The protein resides in the early endosome membrane. It localises to the cell projection. The protein localises to the ruffle membrane. Its subcellular location is the phagocytic cup. It is found in the cytoplasm. ATP-binding cassette (ABC) transporter that plays a role in lipid homeostasis and macrophage-mediated phagocytosis. Binds APOA1 and may function in apolipoprotein-mediated phospholipid efflux from cells. May also mediate cholesterol efflux. May regulate cellular ceramide homeostasis during keratinocyte differentiation. Involved in lipid raft organization and CD1D localization on thymocytes and antigen-presenting cells, which plays an important role in natural killer T-cell development and activation. Plays a role in phagocytosis of apoptotic cells by macrophages. Macrophage phagocytosis is stimulated by APOA1 or APOA2, probably by stabilization of ABCA7. Also involved in phagocytic clearance of amyloid-beta by microglia cells and macrophages. Further limits amyloid-beta production by playing a role in the regulation of amyloid-beta A4 precursor protein (APP) endocytosis and/or processing. The chain is ATP-binding cassette sub-family A member 7 (Abca7) from Rattus norvegicus (Rat).